Reading from the N-terminus, the 222-residue chain is Small ribosomal subunit protein uS3 (222 aa).

In terms of domain architecture, KH type-2 spans 39 to 108 (IRRHIKEKLY…TISLDIKEIK (70 aa)).

It belongs to the universal ribosomal protein uS3 family. Part of the 30S ribosomal subunit. Forms a tight complex with proteins S10 and S14.

In terms of biological role, binds the lower part of the 30S subunit head. Binds mRNA in the 70S ribosome, positioning it for translation. The sequence is that of Small ribosomal subunit protein uS3 from Caldicellulosiruptor saccharolyticus (strain ATCC 43494 / DSM 8903 / Tp8T 6331).